Consider the following 329-residue polypeptide: MLPTAVLLVLAVSVVARDNTTCDGPCGVRFRQNRQGGVRIIGGQDAAHGAWPWMVSLQIFTYHNNRRYHVCGGSLLNSQWLLTAAHCFRIKKKVTDWRLIFGAKEVEWGTNKPVKPPLQERYVEKIIIHEKYSASSEANDIALMKITPPVTCGHFIGPGCLPQFRAGPPRVPQTCWVAGWGFLQENARRTSPMLQEARVDLIDLGLCNSTRWYNGRIRSTNVCAGYPEGKIDTCQGDSGGPLMCKDSAENSYVVVGITSWGVGCARAKRPGVYTSTWSYLNWIASKIGSTAVHMIQLPTASPASTPGAQASSGSVQPSVRPPWFFQQIT.

The N-terminal stretch at 1–17 is a signal peptide; that stretch reads MLPTAVLLVLAVSVVAR. A glycan (N-linked (GlcNAc...) asparagine) is linked at Asn19. 6 disulfide bridges follow: Cys22–Cys152, Cys26–Cys160, Cys71–Cys87, Cys175–Cys244, Cys207–Cys223, and Cys234–Cys264. The Peptidase S1 domain maps to 40-288; sequence IIGGQDAAHG…YLNWIASKIG (249 aa). Catalysis depends on charge relay system residues His86 and Asp140. Asn208 is a glycosylation site (N-linked (GlcNAc...) asparagine). The active-site Charge relay system is Ser238.

The protein belongs to the peptidase S1 family. As to quaternary structure, heavy chain (catalytic) and a light chain linked by two disulfide bonds. Forms a heterodimer with SERPINA5.

It catalyses the reaction Preferential cleavage: Arg-|-Xaa, Lys-|-Xaa.. With respect to regulation, inhibited by SERPINA5. Functionally, acrosin is the major protease of mammalian spermatozoa. It is a serine protease of trypsin-like cleavage specificity, it is synthesized in a zymogen form, proacrosin and stored in the acrosome. The sequence is that of Acrosin (ACR) from Ovis aries (Sheep).